We begin with the raw amino-acid sequence, 425 residues long: tRNA(Ile)-lysidine synthase (425 aa).

27–32 (SGGLDS) is a binding site for ATP.

The protein belongs to the tRNA(Ile)-lysidine synthase family.

The protein resides in the cytoplasm. It catalyses the reaction cytidine(34) in tRNA(Ile2) + L-lysine + ATP = lysidine(34) in tRNA(Ile2) + AMP + diphosphate + H(+). Functionally, ligates lysine onto the cytidine present at position 34 of the AUA codon-specific tRNA(Ile) that contains the anticodon CAU, in an ATP-dependent manner. Cytidine is converted to lysidine, thus changing the amino acid specificity of the tRNA from methionine to isoleucine. The protein is tRNA(Ile)-lysidine synthase of Streptococcus pneumoniae serotype 2 (strain D39 / NCTC 7466).